A 216-amino-acid chain; its full sequence is Large ribosomal subunit protein uL3 (216 aa).

The disordered stretch occupies residues 137–157 (GASHGAHKNHRKPGSIGGAST).

The protein belongs to the universal ribosomal protein uL3 family. As to quaternary structure, part of the 50S ribosomal subunit. Forms a cluster with proteins L14 and L19.

Its function is as follows. One of the primary rRNA binding proteins, it binds directly near the 3'-end of the 23S rRNA, where it nucleates assembly of the 50S subunit. The polypeptide is Large ribosomal subunit protein uL3 (Paenarthrobacter aurescens (strain TC1)).